A 789-amino-acid polypeptide reads, in one-letter code: Trimethylamine-oxide aldolase (789 aa).

In the C-terminal section; belongs to the GcvT family.

The catalysed reaction is trimethylamine N-oxide + H(+) = dimethylamine + formaldehyde. Its function is as follows. Catalyzes the conversion of trimethylamine N-oxide (TMAO) to dimethylamine (DMA) and formaldehyde. The polypeptide is Trimethylamine-oxide aldolase (Ruegeria pomeroyi (strain ATCC 700808 / DSM 15171 / DSS-3) (Silicibacter pomeroyi)).